A 224-amino-acid polypeptide reads, in one-letter code: Ribonuclease HII (224 aa).

One can recognise an RNase H type-2 domain in the interval 7 to 217 (STIMGIDEAG…SNAVIADCLQ (211 aa)). A divalent metal cation-binding residues include Asp-13, Glu-14, and Asp-111.

Belongs to the RNase HII family. Mn(2+) is required as a cofactor. Mg(2+) serves as cofactor.

The protein resides in the cytoplasm. The catalysed reaction is Endonucleolytic cleavage to 5'-phosphomonoester.. In terms of biological role, endonuclease that specifically degrades the RNA of RNA-DNA hybrids. This chain is Ribonuclease HII, found in Methanocella arvoryzae (strain DSM 22066 / NBRC 105507 / MRE50).